The chain runs to 372 residues: Glutamine synthetase (372 aa).

Residues 24-103 (VIAEYVWVDG…VLAECFNSDG (80 aa)) form the GS beta-grasp domain. Positions 110–372 (HRHEANKLFQ…KEYERETNEQ (263 aa)) constitute a GS catalytic domain.

It belongs to the glutamine synthetase family. Homooctamer.

It localises to the cytoplasm. It carries out the reaction L-glutamate + NH4(+) + ATP = L-glutamine + ADP + phosphate + H(+). This chain is Glutamine synthetase (GLN1), found in Candida glabrata (strain ATCC 2001 / BCRC 20586 / JCM 3761 / NBRC 0622 / NRRL Y-65 / CBS 138) (Yeast).